A 242-amino-acid polypeptide reads, in one-letter code: Cell division protein FtsQ (242 aa).

Residues 1-12 (MWDNAEAMERLT) are Cytoplasmic-facing. Residues 13–32 (RWLLVMMAMLLAASGLVWFY) form a helical membrane-spanning segment. Residues 33 to 242 (NSNHLPVKQV…DGLPEKESEE (210 aa)) are Periplasmic-facing. In terms of domain architecture, POTRA spans 37 to 106 (LPVKQVSLKG…DTVEVVLTER (70 aa)).

It belongs to the FtsQ/DivIB family. FtsQ subfamily. In terms of assembly, part of a complex composed of FtsB, FtsL and FtsQ.

Its subcellular location is the cell inner membrane. Essential cell division protein. May link together the upstream cell division proteins, which are predominantly cytoplasmic, with the downstream cell division proteins, which are predominantly periplasmic. May control correct divisome assembly. The sequence is that of Cell division protein FtsQ from Neisseria gonorrhoeae (strain ATCC 700825 / FA 1090).